The chain runs to 96 residues: Small ribosomal subunit protein bS6 (96 aa).

This sequence belongs to the bacterial ribosomal protein bS6 family.

Binds together with bS18 to 16S ribosomal RNA. The sequence is that of Small ribosomal subunit protein bS6 from Streptococcus equi subsp. zooepidemicus (strain MGCS10565).